A 450-amino-acid chain; its full sequence is Gastrin/cholecystokinin type B receptor (450 aa).

The Extracellular portion of the chain corresponds to 1-57 (MELLKLNSSVQGPGPGSGSSLCHPGVSLLNSSSAGNLSCEPPRIRGTGTRELELAIR). N7, N30, and N36 each carry an N-linked (GlcNAc...) asparagine glycan. The helical transmembrane segment at 58–79 (ITLYAVIFLMSIGGNMLIIVVL) threads the bilayer. The Cytoplasmic portion of the chain corresponds to 80–87 (GLSRRLRT). Residues 88–109 (VTNAFLLSLAVSDLLLAVACMP) traverse the membrane as a helical segment. Topologically, residues 110-131 (FTLLPNLMGTFIFGTVICKAVS) are extracellular. Cysteines 127 and 205 form a disulfide. Residues 132-150 (YLMGVSVSVSTLNLVAIAL) traverse the membrane as a helical segment. Residues 151 to 170 (ERYSAICRPLQARVWQTRSH) are Cytoplasmic-facing. A helical membrane pass occupies residues 171–189 (AARVILATWLLSGLLMVPY). Over 190 to 219 (PVYTVVQPVGPRVLQCMHRWPSARVRQTWS) the chain is Extracellular. A helical membrane pass occupies residues 220–242 (VLLLMLLFFIPGVVMAVAYGLIS). Topologically, residues 243 to 336 (RELYLGLRFD…KLLAKKRVVR (94 aa)) are cytoplasmic. A disordered region spans residues 258 to 277 (DTQSRVRNQGGLPGGTAPGP). The chain crosses the membrane as a helical span at residues 337-358 (MLLVIVLLFFLCWLPIYSANTW). At 359 to 376 (CAFDGPGAHRALSGAPIS) the chain is on the extracellular side. Residues 377 to 397 (FIHLLSYASACVNPLVYCFMH) traverse the membrane as a helical segment. Over 398–450 (RRFRQACLDTCARCCPRPPRARPRPLPDEDPPTPSIASLSRLSYTTISTLGPG) the chain is Cytoplasmic. C411 carries the S-palmitoyl cysteine lipid modification.

This sequence belongs to the G-protein coupled receptor 1 family. In terms of tissue distribution, stomach and brain.

The protein localises to the cell membrane. Its function is as follows. Receptor for gastrin and cholecystokinin. The CCK-B receptors occur throughout the central nervous system where they modulate anxiety, analgesia, arousal, and neuroleptic activity. This receptor mediates its action by association with G proteins that activate a phosphatidylinositol-calcium second messenger system. This is Gastrin/cholecystokinin type B receptor (CCKBR) from Mastomys natalensis (African soft-furred rat).